Reading from the N-terminus, the 276-residue chain is NH(3)-dependent NAD(+) synthetase (276 aa).

ATP is bound at residue 43–50; it reads GISGGVDS. Aspartate 49 provides a ligand contact to Mg(2+). Residue arginine 146 coordinates deamido-NAD(+). ATP is bound at residue threonine 166. Mg(2+) is bound at residue glutamate 171. 2 residues coordinate deamido-NAD(+): lysine 179 and aspartate 186. 2 residues coordinate ATP: lysine 195 and threonine 217. 266-267 provides a ligand contact to deamido-NAD(+); sequence HK.

The protein belongs to the NAD synthetase family. As to quaternary structure, homodimer.

It catalyses the reaction deamido-NAD(+) + NH4(+) + ATP = AMP + diphosphate + NAD(+) + H(+). It participates in cofactor biosynthesis; NAD(+) biosynthesis; NAD(+) from deamido-NAD(+) (ammonia route): step 1/1. Functionally, catalyzes the ATP-dependent amidation of deamido-NAD to form NAD. Uses ammonia as a nitrogen source. This Aliivibrio salmonicida (strain LFI1238) (Vibrio salmonicida (strain LFI1238)) protein is NH(3)-dependent NAD(+) synthetase.